Here is a 125-residue protein sequence, read N- to C-terminus: Succinate dehydrogenase assembly factor 3, mitochondrial (125 aa).

The N-terminal 30 residues, 1 to 30, are a transit peptide targeting the mitochondrion; it reads MPGRHVSRVRALYKRVLQLHRVLPPDLKSL.

It belongs to the complex I LYR family. SDHAF3 subfamily. As to quaternary structure, interacts with SDHB within an SDHA-SDHB subcomplex.

The protein localises to the mitochondrion matrix. Plays an essential role in the assembly of succinate dehydrogenase (SDH), an enzyme complex (also referred to as respiratory complex II) that is a component of both the tricarboxylic acid (TCA) cycle and the mitochondrial electron transport chain, and which couples the oxidation of succinate to fumarate with the reduction of ubiquinone (coenzyme Q) to ubiquinol. Promotes maturation of the iron-sulfur protein subunit SDHB of the SDH catalytic dimer, protecting it from the deleterious effects of oxidants. May act together with SDHAF1. The chain is Succinate dehydrogenase assembly factor 3, mitochondrial from Homo sapiens (Human).